Consider the following 287-residue polypeptide: Mitochondrial glycine transporter A (287 aa).

3 Solcar repeats span residues 7–97, 104–188, and 198–282; these read HPAV…LKQR, PGPL…TKHL, and YAPV…LMAQ. 6 helical membrane passes run 13-38, 72-98, 110-135, 163-186, 202-228, and 257-275; these read FMCG…TRLQ, GVSP…KQRY, VLLG…TRFE, GLMA…SQTK, ANFS…KTHI, and GAVP…AWTV.

The protein belongs to the mitochondrial carrier (TC 2.A.29) family. SLC25A38 subfamily. As to expression, at 24 hours post-fertilization, expressed predominantly in posterior blood island, posterior cardinal vein and circulating blood, as well as in somites, brain and retina. At 34 hours post-fertilization, becomes restricted to posterior blood island and circulating blood.

It localises to the mitochondrion inner membrane. The enzyme catalyses glycine(in) = glycine(out). Mitochondrial glycine transporter that imports glycine into the mitochondrial matrix. Plays an important role in providing glycine for the first enzymatic step in heme biosynthesis, the condensation of glycine with succinyl-CoA to produce 5-aminolevulinate (ALA) in the mitochondrial matrix. Required during erythropoiesis. Functionally, may play a role as pro-apoptotic protein that induces caspase-dependent apoptosis. In Danio rerio (Zebrafish), this protein is Mitochondrial glycine transporter A (slc25a38a).